We begin with the raw amino-acid sequence, 202 residues long: Nudix hydrolase 13, mitochondrial (202 aa).

The region spanning 18-167 is the Nudix hydrolase domain; that stretch reads NFRLVSGCIP…WMQSALEEFL (150 aa). Residues 65 to 86 carry the Nudix box motif; it reads GGWEDDETVLEAASREAMEEAG. Mg(2+) contacts are provided by glutamate 80 and glutamate 84.

Belongs to the Nudix hydrolase family. In terms of assembly, monomer. Mg(2+) is required as a cofactor. In terms of tissue distribution, expressed in roots, leaves, stems and inflorescences.

The protein localises to the mitochondrion. With respect to regulation, inhibited by fluoride. In terms of biological role, mediates the hydrolysis of some nucleoside diphosphate derivatives. Can use diadenosine 5',5'''-P(1)P(6) hexaphosphate (Ap(6)A), diadenosine 5',5'''-P(1)P(5) pentaphosphate (Ap(5)A) and adenosine tetraphosphate (p(4)A) as substrates, but not diadenosine 5',5'''-P(1)P(4) tetraphosphate (Ap(4)A), diadenosine 5',5'''-P(1)P(3) triphosphate (Ap(3)A), deoxyribonucleoside triphosphates, ribonucleoside triphosphates, diphosphoinositol pentakisphosphate (PP-InsP(5)) and 5-phospho-alpha-D-ribosyl diphosphate (PRPP). The chain is Nudix hydrolase 13, mitochondrial (NUDT13) from Arabidopsis thaliana (Mouse-ear cress).